We begin with the raw amino-acid sequence, 196 residues long: Crossover junction endodeoxyribonuclease RuvC (196 aa).

Residues D19, E80, and D153 contribute to the active site. Mg(2+) contacts are provided by D19, E80, and D153.

The protein belongs to the RuvC family. As to quaternary structure, homodimer which binds Holliday junction (HJ) DNA. The HJ becomes 2-fold symmetrical on binding to RuvC with unstacked arms; it has a different conformation from HJ DNA in complex with RuvA. In the full resolvosome a probable DNA-RuvA(4)-RuvB(12)-RuvC(2) complex forms which resolves the HJ. Mg(2+) is required as a cofactor.

It localises to the cytoplasm. It catalyses the reaction Endonucleolytic cleavage at a junction such as a reciprocal single-stranded crossover between two homologous DNA duplexes (Holliday junction).. Its function is as follows. The RuvA-RuvB-RuvC complex processes Holliday junction (HJ) DNA during genetic recombination and DNA repair. Endonuclease that resolves HJ intermediates. Cleaves cruciform DNA by making single-stranded nicks across the HJ at symmetrical positions within the homologous arms, yielding a 5'-phosphate and a 3'-hydroxyl group; requires a central core of homology in the junction. The consensus cleavage sequence is 5'-(A/T)TT(C/G)-3'. Cleavage occurs on the 3'-side of the TT dinucleotide at the point of strand exchange. HJ branch migration catalyzed by RuvA-RuvB allows RuvC to scan DNA until it finds its consensus sequence, where it cleaves and resolves the cruciform DNA. This chain is Crossover junction endodeoxyribonuclease RuvC, found in Cutibacterium acnes (strain DSM 16379 / KPA171202) (Propionibacterium acnes).